A 136-amino-acid polypeptide reads, in one-letter code: Histone H2B (136 aa).

Residues 1-10 show a composition bias toward basic and acidic residues; it reads MPPKAADKKP. Residues 1–44 form a disordered region; the sequence is MPPKAADKKPAAKAPVASKAPEKKDAGKKTASTGEKKKRTKARR. 2 positions are modified to N6-acetyllysine; alternate: Lys8 and Lys9. Glycyl lysine isopeptide (Lys-Gly) (interchain with G-Cter in SUMO); alternate cross-links involve residues Lys8 and Lys9. N6-acetyllysine is present on Lys13. Residue Lys23 is modified to N6-acetyllysine; alternate. Residue Lys23 forms a Glycyl lysine isopeptide (Lys-Gly) (interchain with G-Cter in SUMO); alternate linkage. Residue Lys24 forms a Glycyl lysine isopeptide (Lys-Gly) (interchain with G-Cter in SUMO) linkage. Lys130 is covalently cross-linked (Glycyl lysine isopeptide (Lys-Gly) (interchain with G-Cter in ubiquitin)).

This sequence belongs to the histone H2B family. In terms of assembly, the nucleosome is a histone octamer containing two molecules each of H2A, H2B, H3 and H4 assembled in one H3-H4 heterotetramer and two H2A-H2B heterodimers. The octamer wraps approximately 147 bp of DNA. Monoubiquitinated to form H2BK123ub1. H2BK123ub1 gives a specific tag for epigenetic transcriptional activation and is also prerequisite for H3K4me and H3K79me formation. H2BK123ub1 also modulates the formation of double-strand breaks during meiosis and is a prerequisite for DNA-damage checkpoint activation. In terms of processing, acetylated by GCN5 to form H2BK11ac and H2BK16ac. H2BK16ac can also be formed by ESA1. Acetylation of N-terminal lysines and particularly formation of H2BK11acK16ac has a positive effect on transcription. Post-translationally, sumoylation to form H2BK6su or H2BK7su, and probably also H2BK16su or H2BK17su, occurs preferentially near the telomeres and represses gene transcription.

It is found in the nucleus. Its subcellular location is the chromosome. Core component of nucleosome. Nucleosomes wrap and compact DNA into chromatin, limiting DNA accessibility to the cellular machineries which require DNA as a template. Histones thereby play a central role in transcription regulation, DNA repair, DNA replication and chromosomal stability. DNA accessibility is regulated via a complex set of post-translational modifications of histones, also called histone code, and nucleosome remodeling. The sequence is that of Histone H2B (hh2b) from Rosellinia necatrix (White root-rot fungus).